The following is a 239-amino-acid chain: Yolk ferritin (239 aa).

An N-terminal signal peptide occupies residues 1-18; the sequence is MNSVLFLTLAVCSSLAYG. The Ferritin-like diiron domain maps to 27-217; it reads QNYKENINQL…HAITRLRSFE (191 aa). Fe cation-binding residues include Glu-44 and Glu-79. The segment at 105 to 146 is insertion; not present in other ferritins; it reads KDACETVMKFVTSDTSGLEEFRDRRMCICGFVATKTINDNCG. 2 residues coordinate Fe cation: Glu-165 and Gln-199.

This sequence belongs to the ferritin family. Oligomer of 12 or 24 subunits. The functional molecule is roughly spherical and contains a central cavity into which the polymeric ferric iron core is deposited. In terms of tissue distribution, midgut gland and bloodstream.

Its subcellular location is the secreted. It carries out the reaction 4 Fe(2+) + O2 + 4 H(+) = 4 Fe(3+) + 2 H2O. Stores iron in a soluble, non-toxic, readily available form. Important for iron homeostasis. Has ferroxidase activity. Iron is taken up in the ferrous form and deposited as ferric hydroxides after oxidation. The protein is Yolk ferritin of Lymnaea stagnalis (Great pond snail).